Consider the following 870-residue polypeptide: DNA mismatch repair protein MutS (870 aa).

617–624 (GPNMAGKS) serves as a coordination point for ATP.

This sequence belongs to the DNA mismatch repair MutS family.

Its function is as follows. This protein is involved in the repair of mismatches in DNA. It is possible that it carries out the mismatch recognition step. This protein has a weak ATPase activity. This is DNA mismatch repair protein MutS from Phocaeicola vulgatus (strain ATCC 8482 / DSM 1447 / JCM 5826 / CCUG 4940 / NBRC 14291 / NCTC 11154) (Bacteroides vulgatus).